Consider the following 385-residue polypeptide: Chaperone protein DnaJ (385 aa).

Positions 5–70 (DYYEVLGVAK…QKRAAYDRYG (66 aa)) constitute a J domain. A CR-type zinc finger spans residues 145–223 (GFDTEIRVPS…CDGVGRTRRN (79 aa)). Positions 158, 161, 175, 178, 197, 200, 211, and 214 each coordinate Zn(2+). CXXCXGXG motif repeat units lie at residues 158-165 (CDTCHGSG), 175-182 (CRTCGGSG), 197-204 (CPTCHGTG), and 211-218 (CPSCDGVG).

Belongs to the DnaJ family. Homodimer. Zn(2+) is required as a cofactor.

The protein resides in the cytoplasm. In terms of biological role, participates actively in the response to hyperosmotic and heat shock by preventing the aggregation of stress-denatured proteins and by disaggregating proteins, also in an autonomous, DnaK-independent fashion. Unfolded proteins bind initially to DnaJ; upon interaction with the DnaJ-bound protein, DnaK hydrolyzes its bound ATP, resulting in the formation of a stable complex. GrpE releases ADP from DnaK; ATP binding to DnaK triggers the release of the substrate protein, thus completing the reaction cycle. Several rounds of ATP-dependent interactions between DnaJ, DnaK and GrpE are required for fully efficient folding. Also involved, together with DnaK and GrpE, in the DNA replication of plasmids through activation of initiation proteins. This Bordetella pertussis (strain Tohama I / ATCC BAA-589 / NCTC 13251) protein is Chaperone protein DnaJ.